The primary structure comprises 93 residues: Integration host factor subunit beta (93 aa).

This sequence belongs to the bacterial histone-like protein family. As to quaternary structure, heterodimer of an alpha and a beta chain.

Functionally, this protein is one of the two subunits of integration host factor, a specific DNA-binding protein that functions in genetic recombination as well as in transcriptional and translational control. This Cereibacter sphaeroides (strain KD131 / KCTC 12085) (Rhodobacter sphaeroides) protein is Integration host factor subunit beta.